We begin with the raw amino-acid sequence, 174 residues long: NADH-ubiquinone oxidoreductase chain 6 (174 aa).

The next 4 membrane-spanning stretches (helical) occupy residues Ser-25–Val-45, Phe-48–Tyr-68, Phe-82–Leu-102, and Leu-143–Thr-163.

Belongs to the complex I subunit 6 family.

It localises to the mitochondrion membrane. It catalyses the reaction a ubiquinone + NADH + 5 H(+)(in) = a ubiquinol + NAD(+) + 4 H(+)(out). Core subunit of the mitochondrial membrane respiratory chain NADH dehydrogenase (Complex I) that is believed to belong to the minimal assembly required for catalysis. Complex I functions in the transfer of electrons from NADH to the respiratory chain. The immediate electron acceptor for the enzyme is believed to be ubiquinone. The sequence is that of NADH-ubiquinone oxidoreductase chain 6 (mt:ND6) from Anopheles gambiae (African malaria mosquito).